The sequence spans 339 residues: Caspase drICE (339 aa).

Residues 1–28 (MDATNNGESADQVGIRVGNPEQPNDHTD) constitute a propeptide that is removed on maturation. Residues 1-45 (MDATNNGESADQVGIRVGNPEQPNDHTDALGSVGSGGAGSSGLVA) form a disordered region. Catalysis depends on residues histidine 169 and cysteine 211. A propeptide spanning residues 218–230 (GGVTMQRSQTETD) is cleaved from the precursor.

This sequence belongs to the peptidase C14A family. In terms of assembly, heterotetramer that consists of two anti-parallel arranged heterodimers, each one formed by a 21 kDa (p21) and a 12 kDa (p12) subunit. Inactive pro-form can homodimerize. Dronc and Drice can form a stable complex. Interacts with Diap2 (via BIR3 domain) to form a stable complex. May interact with some isoforms of Dark.

With respect to regulation, zymogen activated by proteolytic cleavage; cleaved by the initiator caspase Dronc upon apoptosis induction. Its function is as follows. Involved in the activation cascade of caspases responsible for apoptosis execution. Acts downstream of rpr. Cleaves baculovirus p35 and lamin DmO in vitro. The polypeptide is Caspase drICE (Drice) (Drosophila melanogaster (Fruit fly)).